Reading from the N-terminus, the 463-residue chain is Probable mannan endo-1,4-beta-mannosidase F (463 aa).

A signal peptide spans 1–18; that stretch reads MRSLSSIALLSVVGAASA. A CBM1 domain is found at 19 to 54; sequence QAGPWAQCGGKSFSGSSECASGWKCQELNEWFSQCV. A disordered region spans residues 57-78; that stretch reads AESTTPTVSSTPTPTDAPSVSI. Positions 59-77 are enriched in low complexity; sequence STTPTVSSTPTPTDAPSVS. A ser-rich linker region spans residues 75-118; it reads SVSITASVTTGINKSISVSSASKSTPLPSSSSASPSPRPTGSGS. N-linked (GlcNAc...) asparagine glycosylation is present at asparagine 87. Residues 93–118 are compositionally biased toward low complexity; it reads SSASKSTPLPSSSSASPSPRPTGSGS. Positions 93-121 are disordered; that stretch reads SSASKSTPLPSSSSASPSPRPTGSGSFAK. A catalytic region spans residues 119-463; sequence FAKADGLQFS…MDHMENVNKN (345 aa). The substrate site is built by tryptophan 171 and asparagine 285. Glutamate 286 serves as the catalytic Proton donor/acceptor. Tyrosine 361 is a substrate binding site. Glutamate 395 acts as the Nucleophile in catalysis. Residue tryptophan 424 participates in substrate binding.

This sequence belongs to the glycosyl hydrolase 5 (cellulase A) family.

The protein localises to the secreted. It catalyses the reaction Random hydrolysis of (1-&gt;4)-beta-D-mannosidic linkages in mannans, galactomannans and glucomannans.. Its function is as follows. Endo-1,4-mannanase, a crucial enzyme for depolymerization of seed galactomannans and wood galactoglucomannans. This chain is Probable mannan endo-1,4-beta-mannosidase F (manF), found in Aspergillus oryzae (strain ATCC 42149 / RIB 40) (Yellow koji mold).